The sequence spans 413 residues: CinA-like protein (413 aa).

Belongs to the CinA family.

The polypeptide is CinA-like protein (Crocosphaera subtropica (strain ATCC 51142 / BH68) (Cyanothece sp. (strain ATCC 51142))).